Reading from the N-terminus, the 177-residue chain is NAD(P)H-quinone oxidoreductase subunit 6, chloroplastic (177 aa).

Transmembrane regions (helical) follow at residues 10–30, 32–52, 61–81, 90–112, and 152–172; these read VLLV…VLLT, PIYS…FYIL, AQLL…VMFM, FYLW…FSLI, and FYLP…GAIT.

This sequence belongs to the complex I subunit 6 family. In terms of assembly, NDH is composed of at least 16 different subunits, 5 of which are encoded in the nucleus.

Its subcellular location is the plastid. It is found in the chloroplast thylakoid membrane. The enzyme catalyses a plastoquinone + NADH + (n+1) H(+)(in) = a plastoquinol + NAD(+) + n H(+)(out). The catalysed reaction is a plastoquinone + NADPH + (n+1) H(+)(in) = a plastoquinol + NADP(+) + n H(+)(out). NDH shuttles electrons from NAD(P)H:plastoquinone, via FMN and iron-sulfur (Fe-S) centers, to quinones in the photosynthetic chain and possibly in a chloroplast respiratory chain. The immediate electron acceptor for the enzyme in this species is believed to be plastoquinone. Couples the redox reaction to proton translocation, and thus conserves the redox energy in a proton gradient. The sequence is that of NAD(P)H-quinone oxidoreductase subunit 6, chloroplastic (ndhG) from Acorus calamus var. americanus (American sweet flag).